Consider the following 114-residue polypeptide: uncharacterized protein (114 aa).

The first 19 residues, 1–19 (MKASYLVLIFISIFSMAQA), serve as a signal peptide directing secretion. Position 41 is a phosphoserine (Ser-41).

This sequence belongs to the protease inhibitor I9 family.

This is an uncharacterized protein from Saccharomyces cerevisiae (strain ATCC 204508 / S288c) (Baker's yeast).